Consider the following 201-residue polypeptide: Small ribosomal subunit protein uS4 (201 aa).

Positions R92–V155 constitute an S4 RNA-binding domain.

The protein belongs to the universal ribosomal protein uS4 family. Part of the 30S ribosomal subunit. Contacts protein S5. The interaction surface between S4 and S5 is involved in control of translational fidelity.

One of the primary rRNA binding proteins, it binds directly to 16S rRNA where it nucleates assembly of the body of the 30S subunit. Functionally, with S5 and S12 plays an important role in translational accuracy. The polypeptide is Small ribosomal subunit protein uS4 (Staphylococcus carnosus (strain TM300)).